We begin with the raw amino-acid sequence, 74 residues long: Large ribosomal subunit protein bL31 (74 aa).

4 residues coordinate Zn(2+): C16, C18, C38, and C41.

It belongs to the bacterial ribosomal protein bL31 family. Type A subfamily. Part of the 50S ribosomal subunit. Zn(2+) serves as cofactor.

Binds the 23S rRNA. This Mycolicibacterium vanbaalenii (strain DSM 7251 / JCM 13017 / BCRC 16820 / KCTC 9966 / NRRL B-24157 / PYR-1) (Mycobacterium vanbaalenii) protein is Large ribosomal subunit protein bL31.